The sequence spans 217 residues: Monomethylamine corrinoid protein 1 (217 aa).

One can recognise a B12-binding N-terminal domain in the interval 1–91; sequence MANQEIFDKL…ELEKNKKEGE (91 aa). The B12-binding domain occupies 93–217; the sequence is AGLAITFVAE…AAKVALEVMK (125 aa). His106 is a binding site for methylcob(III)alamin.

In terms of assembly, can form a complex with MtmB.

It functions in the pathway one-carbon metabolism; methanogenesis from methylamine. In terms of biological role, acts as a methyl group carrier between MtmB and MtbA. The chain is Monomethylamine corrinoid protein 1 (mtmC1) from Methanosarcina barkeri.